The following is a 157-amino-acid chain: Ribosome maturation factor RimP (157 aa).

This sequence belongs to the RimP family.

It localises to the cytoplasm. Functionally, required for maturation of 30S ribosomal subunits. The sequence is that of Ribosome maturation factor RimP from Levilactobacillus brevis (strain ATCC 367 / BCRC 12310 / CIP 105137 / JCM 1170 / LMG 11437 / NCIMB 947 / NCTC 947) (Lactobacillus brevis).